The primary structure comprises 140 residues: MSKRGRGGSSGAKFRISLGLPVGAVINCADNTGAKNLYIISVKGIKGQLNRLPAAGVGDMVMATVKKGKPELRKKVHPAVVIRQRKSYRRKDGVFLYFEDNAGVIVNNKGEMKGSAITGPVAKECADLWPRIASNAGSIA.

Ser17 bears the Phosphoserine mark. At Tyr38 the chain carries Phosphotyrosine.

Belongs to the universal ribosomal protein uL14 family. In terms of assembly, component of the large ribosomal subunit.

The protein resides in the cytoplasm. In terms of biological role, component of the large ribosomal subunit. The ribosome is a large ribonucleoprotein complex responsible for the synthesis of proteins in the cell. The sequence is that of Large ribosomal subunit protein uL14 (RPL23) from Pongo abelii (Sumatran orangutan).